Reading from the N-terminus, the 1252-residue chain is MQQNSVLLALFFLCFSSGLGSGQPGQRDDLQTLLELKNSFITNPKEEDVLRDWNSGSPSYCNWTGVTCGGREIIGLNLSGLGLTGSISPSIGRFNNLIHIDLSSNRLVGPIPTTLSNLSSSLESLHLFSNLLSGDIPSQLGSLVNLKSLKLGDNELNGTIPETFGNLVNLQMLALASCRLTGLIPSRFGRLVQLQTLILQDNELEGPIPAEIGNCTSLALFAAAFNRLNGSLPAELNRLKNLQTLNLGDNSFSGEIPSQLGDLVSIQYLNLIGNQLQGLIPKRLTELANLQTLDLSSNNLTGVIHEEFWRMNQLEFLVLAKNRLSGSLPKTICSNNTSLKQLFLSETQLSGEIPAEISNCQSLKLLDLSNNTLTGQIPDSLFQLVELTNLYLNNNSLEGTLSSSISNLTNLQEFTLYHNNLEGKVPKEIGFLGKLEIMYLYENRFSGEMPVEIGNCTRLQEIDWYGNRLSGEIPSSIGRLKDLTRLHLRENELVGNIPASLGNCHQMTVIDLADNQLSGSIPSSFGFLTALELFMIYNNSLQGNLPDSLINLKNLTRINFSSNKFNGSISPLCGSSSYLSFDVTENGFEGDIPLELGKSTNLDRLRLGKNQFTGRIPRTFGKISELSLLDISRNSLSGIIPVELGLCKKLTHIDLNNNYLSGVIPTWLGKLPLLGELKLSSNKFVGSLPTEIFSLTNILTLFLDGNSLNGSIPQEIGNLQALNALNLEENQLSGPLPSTIGKLSKLFELRLSRNALTGEIPVEIGQLQDLQSALDLSYNNFTGRIPSTISTLPKLESLDLSHNQLVGEVPGQIGDMKSLGYLNLSYNNLEGKLKKQFSRWQADAFVGNAGLCGSPLSHCNRAGSKNQRSLSPKTVVIISAISSLAAIALMVLVIILFFKQNHDLFKKVRGGNSAFSSNSSSSQAPLFSNGGAKSDIKWDDIMEATHYLNEEFMIGSGGSGKVYKAELKNGETIAVKKILWKDDLMSNKSFNREVKTLGTIRHRHLVKLMGYCSSKADGLNLLIYEYMANGSVWDWLHANENTKKKEVLGWETRLKIALGLAQGVEYLHYDCVPPIVHRDIKSSNVLLDSNIEAHLGDFGLAKILTGNYDTNTESNTMFAGSYGYIAPEYAYSLKATEKSDVYSMGIVLMEIVTGKMPTEAMFDEETDMVRWVETVLDTPPGSEAREKLIDSELKSLLPCEEEAAYQVLEIALQCTKSYPQERPSSRQASEYLLNVFNNRAASYREMQTDTDK.

An N-terminal signal peptide occupies residues 1–22 (MQQNSVLLALFFLCFSSGLGSG). Topologically, residues 23–876 (QPGQRDDLQT…QRSLSPKTVV (854 aa)) are extracellular. N-linked (GlcNAc...) asparagine glycosylation is found at Asn-62, Asn-77, and Asn-117. LRR repeat units follow at residues 94 to 118 (FNNL…LSNL), 120 to 143 (SSLE…LGSL), 144 to 166 (VNLK…TFGN), 168 to 190 (VNLQ…RFGR), 191 to 215 (LVQL…IGNC), 217 to 239 (SLAL…LNRL), 240 to 263 (KNLQ…LGDL), 265 to 286 (SIQY…RLTE), 287 to 310 (LANL…EFWR), and 312 to 335 (NQLE…ICSN). Asn-157 carries N-linked (GlcNAc...) asparagine glycosylation. 2 N-linked (GlcNAc...) asparagine glycosylation sites follow: Asn-214 and Asn-229. A glycan (N-linked (GlcNAc...) asparagine) is linked at Asn-299. Residue Asn-336 is glycosylated (N-linked (GlcNAc...) asparagine). LRR repeat units lie at residues 337–360 (TSLK…ISNC), 361–384 (QSLK…LFQL), 386–408 (ELTN…ISNL), 409–433 (TNLQ…GFLG), 435–456 (LEIM…IGNC), 457–480 (TRLQ…IGRL), 481–504 (KDLT…LGNC), 506–528 (QMTV…FGFL), 529–552 (TALE…LINL), 554–575 (NLTR…LCGS), 577–599 (SYLS…LGKS), 600–622 (TNLD…TFGK), 623–648 (ISEL…GLCK), 650–670 (LTHI…WLGK), 671–695 (LPLL…IFSL), 697–719 (NILT…IGNL), 720–743 (QALN…IGKL), 745–767 (KLFE…IGQL), 768–792 (QDLQ…ISTL), 793–816 (PKLE…IGDM), and 818–839 (SLGY…QFSR). N-linked (GlcNAc...) asparagine glycosylation is found at Asn-370, Asn-394, and Asn-407. Asn-455 carries an N-linked (GlcNAc...) asparagine glycan. N-linked (GlcNAc...) asparagine glycans are attached at residues Asn-538, Asn-554, Asn-559, and Asn-566. Asn-709 is a glycosylation site (N-linked (GlcNAc...) asparagine). The N-linked (GlcNAc...) asparagine glycan is linked to Asn-780. N-linked (GlcNAc...) asparagine glycosylation occurs at Asn-823. A helical membrane pass occupies residues 877–897 (IISAISSLAAIALMVLVIILF). Over 898-1252 (FKQNHDLFKK…YREMQTDTDK (355 aa)) the chain is Cytoplasmic. Thr-945 carries the phosphothreonine modification. The Protein kinase domain maps to 948–1232 (LNEEFMIGSG…PSSRQASEYL (285 aa)). Residues 954 to 962 (IGSGGSGKV) and Lys-976 contribute to the ATP site. Residues Tyr-1024 and Tyr-1066 each carry the phosphotyrosine modification. The active-site Proton acceptor is the Asp-1079. The residue at position 1114 (Ser-1114) is a Phosphoserine. Phosphotyrosine occurs at positions 1124 and 1131.

This sequence belongs to the protein kinase superfamily. Ser/Thr protein kinase family. Interacts with CIF1 and CIF2. In terms of tissue distribution, mostly expressed in siliques, seeds, developing embryos and seedlings, detected in flower buds, but not in roots, leaves or stems.

It localises to the cell membrane. It catalyses the reaction L-seryl-[protein] + ATP = O-phospho-L-seryl-[protein] + ADP + H(+). The enzyme catalyses L-threonyl-[protein] + ATP = O-phospho-L-threonyl-[protein] + ADP + H(+). Functionally, together with GSO1, receptor-like serine/threonine-kinase required during the development of the epidermal surface in embryos and cotyledons. Involved in the nuclear division phase of megagametogenesis. In coordination with GSO2, regulates root growth through control of cell division and cell fate specification. Controls seedling root growth by modulating sucrose response after germination. Receptor of the peptide hormones CIF1 and CIF2 required for contiguous Casparian strip diffusion barrier formation in roots. This is LRR receptor-like serine/threonine-protein kinase GSO2 from Arabidopsis thaliana (Mouse-ear cress).